A 354-amino-acid chain; its full sequence is Isopentenyl-diphosphate delta-isomerase (354 aa).

11–12 contacts substrate; the sequence is KK. Residues serine 67, 68-70, serine 98, and asparagine 126 each bind FMN; that span reads SMT. 98–100 lines the substrate pocket; the sequence is SFK. Glutamine 160 contacts substrate. Mg(2+) is bound at residue glutamate 161. Residues lysine 192, threonine 222, and 289 to 290 contribute to the FMN site; that span reads AA.

This sequence belongs to the IPP isomerase type 2 family. In terms of assembly, homooctamer. Dimer of tetramers. The cofactor is FMN. NADPH serves as cofactor. It depends on Mg(2+) as a cofactor.

The protein resides in the cytoplasm. The enzyme catalyses isopentenyl diphosphate = dimethylallyl diphosphate. Involved in the biosynthesis of isoprenoids. Catalyzes the 1,3-allylic rearrangement of the homoallylic substrate isopentenyl (IPP) to its allylic isomer, dimethylallyl diphosphate (DMAPP). This Borreliella afzelii (strain PKo) (Borrelia afzelii) protein is Isopentenyl-diphosphate delta-isomerase.